Here is a 239-residue protein sequence, read N- to C-terminus: Phosphoadenosine 5'-phosphosulfate reductase (239 aa).

Cys235 functions as the Nucleophile; cysteine thiosulfonate intermediate in the catalytic mechanism.

This sequence belongs to the PAPS reductase family. CysH subfamily.

The protein localises to the cytoplasm. It carries out the reaction [thioredoxin]-disulfide + sulfite + adenosine 3',5'-bisphosphate + 2 H(+) = [thioredoxin]-dithiol + 3'-phosphoadenylyl sulfate. Its pathway is sulfur metabolism; hydrogen sulfide biosynthesis; sulfite from sulfate: step 3/3. Functionally, catalyzes the formation of sulfite from phosphoadenosine 5'-phosphosulfate (PAPS) using thioredoxin as an electron donor. This is Phosphoadenosine 5'-phosphosulfate reductase from Thiocapsa roseopersicina.